A 680-amino-acid polypeptide reads, in one-letter code: E3 ubiquitin-protein ligase brl2 (680 aa).

The stretch at 44–72 (RSIQFDELESKIEGLQNLAEEKLKVLATL) forms a coiled coil. The tract at residues 206–233 (PQSTKVKEEATTSSKGKDEEKKVSTVEQ) is disordered. Basic and acidic residues predominate over residues 210–229 (KVKEEATTSSKGKDEEKKVS). Coiled-coil stretches lie at residues 261–288 (LDSNVNEMDKLIMERENALNNVETTNLK), 353–399 (MQND…ETMV), and 485–609 (DSLH…LKDT). The RING-type zinc-finger motif lies at 627–667 (CSVCNFERWKDRIISLCGHGFCYQCIQKRIETRQRRCPICG).

The protein belongs to the BRE1 family. Component of the histone H2B ubiquitin ligase complex (HULC) composed of at least brl1, brl2, rhp6 and shf1.

The protein localises to the nucleus. It carries out the reaction S-ubiquitinyl-[E2 ubiquitin-conjugating enzyme]-L-cysteine + [acceptor protein]-L-lysine = [E2 ubiquitin-conjugating enzyme]-L-cysteine + N(6)-ubiquitinyl-[acceptor protein]-L-lysine.. It participates in protein modification; protein ubiquitination. Functionally, E3 ubiquitin-protein ligase which belongs to the histone H2B ubiquitin ligase complex (HULC) which mediates monoubiquitination of histone H2B to form H2BK123ub1. H2BK123ub1 gives a specific tag for epigenetic transcriptional activation and is also a prerequisite for H3K4me and H3K79me formation. This Schizosaccharomyces pombe (strain 972 / ATCC 24843) (Fission yeast) protein is E3 ubiquitin-protein ligase brl2 (brl2).